The chain runs to 454 residues: tRNA modification GTPase MnmE (454 aa).

(6S)-5-formyl-5,6,7,8-tetrahydrofolate contacts are provided by R23, E80, and K120. A TrmE-type G domain is found at 216 to 377 (GMKVVIAGRP…LRNHLKQSMG (162 aa)). N226 lines the K(+) pocket. GTP is bound by residues 226 to 231 (NAGKSS), 245 to 251 (TDIAGTT), 270 to 273 (DTAG), 335 to 338 (NKAD), and 358 to 360 (SAR). Position 230 (S230) interacts with Mg(2+). The K(+) site is built by T245, I247, and T250. T251 contacts Mg(2+). K454 contacts (6S)-5-formyl-5,6,7,8-tetrahydrofolate.

The protein belongs to the TRAFAC class TrmE-Era-EngA-EngB-Septin-like GTPase superfamily. TrmE GTPase family. In terms of assembly, homodimer. Heterotetramer of two MnmE and two MnmG subunits. K(+) is required as a cofactor.

The protein localises to the cytoplasm. In terms of biological role, exhibits a very high intrinsic GTPase hydrolysis rate. Involved in the addition of a carboxymethylaminomethyl (cmnm) group at the wobble position (U34) of certain tRNAs, forming tRNA-cmnm(5)s(2)U34. The protein is tRNA modification GTPase MnmE of Escherichia coli O127:H6 (strain E2348/69 / EPEC).